Reading from the N-terminus, the 206-residue chain is FMN-dependent NADH:quinone oxidoreductase (206 aa).

FMN-binding positions include Ser-9, 15-17 (SVS), and 139-142 (SRGG).

The protein belongs to the azoreductase type 1 family. Homodimer. Requires FMN as cofactor.

The enzyme catalyses 2 a quinone + NADH + H(+) = 2 a 1,4-benzosemiquinone + NAD(+). It catalyses the reaction N,N-dimethyl-1,4-phenylenediamine + anthranilate + 2 NAD(+) = 2-(4-dimethylaminophenyl)diazenylbenzoate + 2 NADH + 2 H(+). Quinone reductase that provides resistance to thiol-specific stress caused by electrophilic quinones. Its function is as follows. Also exhibits azoreductase activity. Catalyzes the reductive cleavage of the azo bond in aromatic azo compounds to the corresponding amines. This chain is FMN-dependent NADH:quinone oxidoreductase, found in Cupriavidus necator (strain ATCC 17699 / DSM 428 / KCTC 22496 / NCIMB 10442 / H16 / Stanier 337) (Ralstonia eutropha).